The sequence spans 627 residues: CTP synthase (627 aa).

Positions cysteine 300–tyrosine 554 constitute a Glutamine amidotransferase type-1 domain. Active-site for GATase activity residues include cysteine 399, histidine 526, and glutamate 528. A phosphoserine mark is found at serine 567, serine 570, serine 571, and serine 588. A Phosphothreonine modification is found at threonine 595. The segment covering glycine 599–serine 613 has biased composition (polar residues). Positions glycine 599 to lysine 627 are disordered.

It belongs to the CTP synthase family. As to expression, in ovary, expressed in oocytes, follicle cells and nurse cells. Also expressed in larval and adult testis (at protein level). In larvae, expressed in lymph gland, salivary gland, regions of the midgut, testis, optical lobe and trachea. Isoform 1 is expressed in adult testis, ovary, accessory gland and head. Isoform 2 is weakly expressed in ovary.

The protein resides in the cytoplasm. It catalyses the reaction UTP + L-glutamine + ATP + H2O = CTP + L-glutamate + ADP + phosphate + 2 H(+). It functions in the pathway pyrimidine metabolism; CTP biosynthesis via de novo pathway; CTP from UDP: step 2/2. Its function is as follows. Catalyzes the ATP-dependent amination of UTP to CTP with either L-glutamine or ammonia as the source of nitrogen. Constitutes the rate-limiting enzyme in the synthesis of cytosine nucleotides. Required for assembly of cytoophidium in female germline cells. In nurse cells, CTPsyn filament assembly in the cytoophidium is regulated by Ack kinase which may thereby contribute to the control of CTP production at specific stages of oogenesis and development of the nurse cell membrane. The chain is CTP synthase from Drosophila melanogaster (Fruit fly).